Here is a 432-residue protein sequence, read N- to C-terminus: Adenosine 3'-phospho 5'-phosphosulfate transporter 1 (432 aa).

The next 9 membrane-spanning stretches (helical) occupy residues 5–25 (WWAV…ETPE), 40–60 (VVNA…VQYF), 109–129 (ALKL…WGVL), 154–174 (FLVL…CVLC), 238–258 (WEYL…LSSG), 265–285 (PATT…DSFT), 299–319 (SVQM…GSLL), 353–373 (LFIF…IMTL), and 387–407 (GHTV…ALLL). Ser-427 is subject to Phosphoserine.

This sequence belongs to the nucleotide-sugar transporter family. SLC35B subfamily. Highly expressed in the placenta, pancreas, mammary gland and skeletal muscle. Weakly or not expressed in colon, heart and prostate. Expressed in the brain, predominantly in frontal lobe gray matter, subcortical frontal white matter and cerebellum.

It localises to the golgi apparatus membrane. It catalyses the reaction 3'-phosphoadenylyl sulfate(in) + adenosine 3',5'-bisphosphate(out) = 3'-phosphoadenylyl sulfate(out) + adenosine 3',5'-bisphosphate(in). Its function is as follows. Probably functions as a 3'-phosphoadenylyl sulfate:adenosine 3',5'-bisphosphate antiporter at the Golgi membranes. Mediates the transport from the cytosol into the lumen of the Golgi of 3'-phosphoadenylyl sulfate/adenosine 3'-phospho 5'-phosphosulfate (PAPS), a universal sulfuryl donor for sulfation events that take place in that compartment. This chain is Adenosine 3'-phospho 5'-phosphosulfate transporter 1, found in Homo sapiens (Human).